A 598-amino-acid chain; its full sequence is 2-succinyl-5-enolpyruvyl-6-hydroxy-3-cyclohexene-1-carboxylate synthase (598 aa).

Belongs to the TPP enzyme family. MenD subfamily. As to quaternary structure, homodimer. Mg(2+) is required as a cofactor. Requires Mn(2+) as cofactor. Thiamine diphosphate serves as cofactor.

The catalysed reaction is isochorismate + 2-oxoglutarate + H(+) = 5-enolpyruvoyl-6-hydroxy-2-succinyl-cyclohex-3-ene-1-carboxylate + CO2. It functions in the pathway quinol/quinone metabolism; 1,4-dihydroxy-2-naphthoate biosynthesis; 1,4-dihydroxy-2-naphthoate from chorismate: step 2/7. It participates in cofactor biosynthesis; phylloquinone biosynthesis. Catalyzes the thiamine diphosphate-dependent decarboxylation of 2-oxoglutarate and the subsequent addition of the resulting succinic semialdehyde-thiamine pyrophosphate anion to isochorismate to yield 2-succinyl-5-enolpyruvyl-6-hydroxy-3-cyclohexene-1-carboxylate (SEPHCHC). The chain is 2-succinyl-5-enolpyruvyl-6-hydroxy-3-cyclohexene-1-carboxylate synthase from Prochlorococcus marinus (strain NATL1A).